A 356-amino-acid polypeptide reads, in one-letter code: Fructose-1,6-bisphosphatase class 1 (356 aa).

A disordered region spans residues 1–26 (MAREWPMTHPSNHPMDHHHQTLQAHL). Mg(2+) is bound by residues glutamate 101, aspartate 120, leucine 122, and aspartate 123. Substrate-binding positions include 123-126 (DGSS) and asparagine 211. Glutamate 283 lines the Mg(2+) pocket.

It belongs to the FBPase class 1 family. In terms of assembly, homotetramer. Requires Mg(2+) as cofactor.

Its subcellular location is the cytoplasm. The enzyme catalyses beta-D-fructose 1,6-bisphosphate + H2O = beta-D-fructose 6-phosphate + phosphate. It participates in carbohydrate biosynthesis; Calvin cycle. The chain is Fructose-1,6-bisphosphatase class 1 from Bradyrhizobium sp. (strain ORS 278).